A 264-amino-acid polypeptide reads, in one-letter code: Small ribosomal subunit protein eS1B (264 aa).

The segment at 233–264 (GEGGGSGKPAADETGAKVERADGYEPPVQESV) is disordered. Residues 242–255 (AADETGAKVERADG) are compositionally biased toward basic and acidic residues.

It belongs to the eukaryotic ribosomal protein eS1 family. Component of the small ribosomal subunit. Mature ribosomes consist of a small (40S) and a large (60S) subunit. The 40S subunit contains about 33 different proteins and 1 molecule of RNA (18S). The 60S subunit contains about 49 different proteins and 3 molecules of RNA (28S, 5.8S and 5S). Part of the small subunit (SSU) processome, composed of more than 70 proteins and the RNA chaperone small nucleolar RNA (snoRNA) U3.

It localises to the cytoplasm. The protein resides in the nucleus. Its subcellular location is the nucleolus. Component of the small ribosomal subunit. The ribosome is a large ribonucleoprotein complex responsible for the synthesis of proteins in the cell. Part of the small subunit (SSU) processome, first precursor of the small eukaryotic ribosomal subunit. During the assembly of the SSU processome in the nucleolus, many ribosome biogenesis factors, an RNA chaperone and ribosomal proteins associate with the nascent pre-rRNA and work in concert to generate RNA folding, modifications, rearrangements and cleavage as well as targeted degradation of pre-ribosomal RNA by the RNA exosome. May play a role during erythropoiesis. This chain is Small ribosomal subunit protein eS1B (rps3a-b), found in Xenopus laevis (African clawed frog).